Reading from the N-terminus, the 241-residue chain is Carboxy-S-adenosyl-L-methionine synthase (241 aa).

S-adenosyl-L-methionine is bound by residues tyrosine 38, 63-65, 88-89, 116-117, asparagine 131, and arginine 198; these read GCS, DN, and DI.

It belongs to the class I-like SAM-binding methyltransferase superfamily. Cx-SAM synthase family. In terms of assembly, homodimer.

It carries out the reaction prephenate + S-adenosyl-L-methionine = carboxy-S-adenosyl-L-methionine + 3-phenylpyruvate + H2O. In terms of biological role, catalyzes the conversion of S-adenosyl-L-methionine (SAM) to carboxy-S-adenosyl-L-methionine (Cx-SAM). This is Carboxy-S-adenosyl-L-methionine synthase from Actinobacillus pleuropneumoniae serotype 3 (strain JL03).